We begin with the raw amino-acid sequence, 72 residues long: DNA-directed RNA polymerase subunit omega (72 aa).

The protein belongs to the RNA polymerase subunit omega family. In terms of assembly, the RNAP catalytic core consists of 2 alpha, 1 beta, 1 beta' and 1 omega subunit. When a sigma factor is associated with the core the holoenzyme is formed, which can initiate transcription.

It catalyses the reaction RNA(n) + a ribonucleoside 5'-triphosphate = RNA(n+1) + diphosphate. Functionally, promotes RNA polymerase assembly. Latches the N- and C-terminal regions of the beta' subunit thereby facilitating its interaction with the beta and alpha subunits. In Petrotoga mobilis (strain DSM 10674 / SJ95), this protein is DNA-directed RNA polymerase subunit omega.